The chain runs to 315 residues: MRRGEARMTGKHVAVLMGGFSSERSVSLSSGVACATTLEECGYRVTRIDVDRNVASILVELKPDVVFNALHGPFGEDGAIQGVLEYLQIPYTHSGVLASALAMDKDRAKKVAAAAGVVVAPSRLMNRFDIGSQHPMKPPYVVKPVREGSSFGVVIVKEDQPHPPQVIGSADWKYGDEVMVEGYIAGRELTCAVMGDRAMDVCEIMPVGYQFYDYDSKYVAGASTHVCPAKILPNIYQKIQTMALTAHRAIGCRGVSRSDFRFDDRFSEEGEVVWLEINTQPGMTPTSLVPDIAKAAGISFAELLSWMVEDASCLR.

In terms of domain architecture, ATP-grasp spans 109 to 309 (KKVAAAAGVV…FAELLSWMVE (201 aa)). 135–190 (PMKPPYVVKPVREGSSFGVVIVKEDQPHPPQVIGSADWKYGDEVMVEGYIAGRELT) lines the ATP pocket. Residues Asp259, Glu276, and Asn278 each coordinate Mg(2+).

The protein belongs to the D-alanine--D-alanine ligase family. Mg(2+) serves as cofactor. The cofactor is Mn(2+).

It localises to the cytoplasm. It carries out the reaction 2 D-alanine + ATP = D-alanyl-D-alanine + ADP + phosphate + H(+). The protein operates within cell wall biogenesis; peptidoglycan biosynthesis. Functionally, cell wall formation. The sequence is that of D-alanine--D-alanine ligase B from Brucella melitensis biotype 1 (strain ATCC 23456 / CCUG 17765 / NCTC 10094 / 16M).